The following is a 218-amino-acid chain: Glutathione S-transferase Mu 6 (218 aa).

The GST N-terminal domain occupies 1–88; that stretch reads MPVTLGYWDI…YLGRKHNLCG (88 aa). Glutathione is bound by residues 7-8, 46-50, 59-60, and 72-73; these read YW, WLNDK, NL, and QS. Positions 90-208 constitute a GST C-terminal domain; that stretch reads TEEERIRVDI…KTSRFLPSPV (119 aa). Residue Tyr-116 participates in substrate binding.

The protein belongs to the GST superfamily. Mu family. As to quaternary structure, homodimer. As to expression, expressed in liver, stomach and small intestine. Not expressed in spleen, kidney, colon, heart, muscle, brain or lung.

Its subcellular location is the cytoplasm. It catalyses the reaction RX + glutathione = an S-substituted glutathione + a halide anion + H(+). In terms of biological role, conjugation of reduced glutathione to a wide number of exogenous and endogenous hydrophobic electrophiles. The protein is Glutathione S-transferase Mu 6 (Gstm6) of Mus musculus (Mouse).